The following is a 576-amino-acid chain: Malonate--CoA ligase ACSF3, mitochondrial (576 aa).

The N-terminal 83 residues, 1-83 (MLPHVVLTFR…RSLRLSQEIC (83 aa)), are a transit peptide targeting the mitochondrion. ATP is bound by residues 202-210 (TSGTTGRPK), Asp457, Arg471, and Lys563.

The protein belongs to the ATP-dependent AMP-binding enzyme family.

The protein localises to the mitochondrion. The catalysed reaction is tetracosanoate + ATP + CoA = tetracosanoyl-CoA + AMP + diphosphate. The enzyme catalyses malonate + ATP + CoA = malonyl-CoA + AMP + diphosphate. Catalyzes the initial reaction in intramitochondrial fatty acid synthesis, by activating malonate and methylmalonate, but not acetate, into their respective CoA thioester. May have some preference toward very-long-chain substrates. The protein is Malonate--CoA ligase ACSF3, mitochondrial of Homo sapiens (Human).